We begin with the raw amino-acid sequence, 1358 residues long: DNA-directed RNA polymerase subunit beta (1358 aa).

Belongs to the RNA polymerase beta chain family. In terms of assembly, the RNAP catalytic core consists of 2 alpha, 1 beta, 1 beta' and 1 omega subunit. When a sigma factor is associated with the core the holoenzyme is formed, which can initiate transcription.

The catalysed reaction is RNA(n) + a ribonucleoside 5'-triphosphate = RNA(n+1) + diphosphate. Functionally, DNA-dependent RNA polymerase catalyzes the transcription of DNA into RNA using the four ribonucleoside triphosphates as substrates. The polypeptide is DNA-directed RNA polymerase subunit beta (Francisella tularensis subsp. holarctica (strain OSU18)).